A 110-amino-acid polypeptide reads, in one-letter code: uncharacterized protein (110 aa).

To M.jannaschii MJ0123 and A.aeolicus AA15.

This is an uncharacterized protein from Methanocaldococcus jannaschii (strain ATCC 43067 / DSM 2661 / JAL-1 / JCM 10045 / NBRC 100440) (Methanococcus jannaschii).